We begin with the raw amino-acid sequence, 131 residues long: D-ribose pyranase (131 aa).

Catalysis depends on His-20, which acts as the Proton donor. Substrate contacts are provided by residues Asp-28, His-98, and Tyr-120–Asn-122.

Belongs to the RbsD / FucU family. RbsD subfamily. Homodecamer.

The protein resides in the cytoplasm. The catalysed reaction is beta-D-ribopyranose = beta-D-ribofuranose. The protein operates within carbohydrate metabolism; D-ribose degradation; D-ribose 5-phosphate from beta-D-ribopyranose: step 1/2. Catalyzes the interconversion of beta-pyran and beta-furan forms of D-ribose. This Bacillus cereus (strain ATCC 10987 / NRS 248) protein is D-ribose pyranase.